The following is a 27-amino-acid chain: Augerpeptide hhe6.2 (27 aa).

3 cysteine pairs are disulfide-bonded: cysteine 4–cysteine 13, cysteine 8–cysteine 20, and cysteine 12–cysteine 27.

Expressed by the venom duct.

Its subcellular location is the secreted. In Hastula hectica (Sea snail), this protein is Augerpeptide hhe6.2.